Consider the following 404-residue polypeptide: Odorant receptor 74a (404 aa).

Over Met-1–Glu-38 the chain is Cytoplasmic. The chain crosses the membrane as a helical span at residues Ser-39–Cys-59. The Extracellular portion of the chain corresponds to Glu-60–His-67. A helical transmembrane segment spans residues Tyr-68 to Ile-88. The Cytoplasmic segment spans residues Leu-89–Asn-141. The helical transmembrane segment at Ser-142–Tyr-162 threads the bilayer. Over His-163–His-181 the chain is Extracellular. The chain crosses the membrane as a helical span at residues Phe-182–Phe-202. At Gly-203–Arg-274 the chain is on the cytoplasmic side. Residues Ile-275 to Thr-295 form a helical membrane-spanning segment. Topologically, residues Asn-296–Tyr-303 are extracellular. Residues Ile-304–Leu-324 traverse the membrane as a helical segment. Residues Leu-325 to Arg-380 are Cytoplasmic-facing. A helical membrane pass occupies residues Val-381 to Asn-401. Topologically, residues Ser-402–Arg-404 are extracellular.

Belongs to the insect chemoreceptor superfamily. Heteromeric odorant receptor channel (TC 1.A.69) family. Or1a subfamily. In terms of assembly, interacts with Orco. Complexes exist early in the endomembrane system in olfactory sensory neurons (OSNs), coupling these complexes to the conserved ciliary trafficking pathway.

It is found in the cell membrane. In terms of biological role, odorant receptor which mediates acceptance or avoidance behavior, depending on its substrates. The odorant receptor repertoire encodes a large collection of odor stimuli that vary widely in identity, intensity, and duration. May form a complex with Orco to form odorant-sensing units, providing sensitive and prolonged odorant signaling and calcium permeability. Involved in the behavioral responses to octanol, anisole, and 2-heptanone. The polypeptide is Odorant receptor 74a (Or74a) (Drosophila melanogaster (Fruit fly)).